A 381-amino-acid chain; its full sequence is MNVFWFLPTHGDGHFLGTSQGARPVSLPYLKQVAQAADSLGYHGVLIPTGRSCEDSWVVASALAPLTERLRFLVAIRPGIVSPTVSARMAATLDRLSGGRLLINVVTGGDPDENRGDGIHLGHAERYEVTDEFLRVWRRVLQGEAVDFHGKHIHVENAKALYPPLQRPYPPLYFGGSSEAAHELAGEQVDVYLTWGEPLPAVAAKIADVRQRAARHGRTVKFGIRLHVIVRETAEEAWRAADRLIEHISDETIAAAQQSFARFDSEGQRRMAALHGGRRDRLEIQPNLWAGVGLVRGGAGTALVGDPRQVAERIGEYAELGIDSFIFSGYPHLEEAYRFAELVFPLLPEPYASLAGRGLTNLTGPFGEMIANDVLPARAGA.

Belongs to the SsuD family.

The catalysed reaction is an alkanesulfonate + FMNH2 + O2 = an aldehyde + FMN + sulfite + H2O + 2 H(+). In terms of biological role, catalyzes the desulfonation of aliphatic sulfonates. Shows highest activity with methanesulfonate. This chain is Methanesulfonate monooxygenase (msuD), found in Pseudomonas aeruginosa (strain ATCC 15692 / DSM 22644 / CIP 104116 / JCM 14847 / LMG 12228 / 1C / PRS 101 / PAO1).